The primary structure comprises 387 residues: Protein adenylyltransferase VopS (387 aa).

ATP contacts are provided by residues 76-77, 122-124, 353-355, and R359; these read IT, LDS, and GNG. The region spanning 278 to 387 is the Fido domain; the sequence is LNMDNLKELH…NAENSLHGIK (110 aa).

It is found in the secreted. It catalyses the reaction L-tyrosyl-[protein] + ATP = O-(5'-adenylyl)-L-tyrosyl-[protein] + diphosphate. The catalysed reaction is L-threonyl-[protein] + ATP = 3-O-(5'-adenylyl)-L-threonyl-[protein] + diphosphate. Its function is as follows. Adenylyltransferase involved in virulence by mediating the addition of adenosine 5'-monophosphate (AMP) to specific threonine residue of host Rho GTPases RhoA, Rac and Cdc42. The resulting AMPylation prevents the interaction of Rho GTPases with downstream effectors, thereby inhibiting actin assembly in infected cells. This chain is Protein adenylyltransferase VopS (vopS), found in Vibrio parahaemolyticus serotype O3:K6 (strain RIMD 2210633).